Here is an 898-residue protein sequence, read N- to C-terminus: Histone-lysine N-methyltransferase mes-4 (898 aa).

The tract at residues 1–68 is disordered; sequence MLPSSGDSSK…APILTNAPKD (68 aa). The span at 36-51 shows a compositional bias: polar residues; sequence QRNATPQGAGSETSSN. 2 PHD-type zinc fingers span residues 126–214 and 303–355; these read DSKC…CNLD and IKAC…CVCG. The region spanning 537 to 665 is the SET domain; that stretch reads EKIKLAATLC…DGDEITFSYN (129 aa). A Post-SET domain is found at 671–687; it reads NLPDCECGAENCMGTMG. The disordered stretch occupies residues 689-847; the sequence is AKREKPEVAD…SLQTIQETGK (159 aa). The segment covering 692-704 has biased composition (basic and acidic residues); it reads EKPEVADSSEKAA. A compositionally biased stretch (basic residues) spans 705–719; it reads KKNKSSKKKSVKNQN. Composition is skewed to low complexity over residues 737-751 and 761-773; these read ISPSKPSTSSASSTS and SQNKKNLKKNSNQ. The span at 774–788 shows a compositional bias: polar residues; that stretch reads PVADTGSTLSTSTEL. Residues 802–811 show a composition bias toward low complexity; it reads SSRSRAASSS.

The protein belongs to the class V-like SAM-binding methyltransferase superfamily. Histone-lysine methyltransferase family. SET2 subfamily. As to expression, in adults, it is predominantly expressed in the germline, and weakly expressed in intestinal cells.

It localises to the nucleus. Its subcellular location is the chromosome. It catalyses the reaction L-lysyl(36)-[histone H3] + 2 S-adenosyl-L-methionine = N(6),N(6)-dimethyl-L-lysyl(36)-[histone H3] + 2 S-adenosyl-L-homocysteine + 2 H(+). Histone methyltransferase. Dimethylates 'Lys-36' of histone H3, a specific tag for epigenetic transcriptional activation. Plays a central role in early development and is responsible for all H3 'Lys-36' dimethylation until about the 40-cell stage. Indirectly involved in the global inactivation of the X chromosomes in germline cells, possibly by excluding the mes-2-mes-3-mes-6 repressive Polycomb complex from the autosomes. Not related to transcription elongation. Required for small-RNA-induced H3K27 trimethylation. May suppress sensitivity to RNAi. May regulate the expression of genes required for vulval development. The polypeptide is Histone-lysine N-methyltransferase mes-4 (Caenorhabditis elegans).